The chain runs to 86 residues: Small ribosomal subunit protein uS15c (86 aa).

Belongs to the universal ribosomal protein uS15 family. As to quaternary structure, part of the 30S ribosomal subunit.

The protein localises to the plastid. This chain is Small ribosomal subunit protein uS15c (rps15), found in Cuscuta gronovii (Common dodder).